Consider the following 508-residue polypeptide: Photosystem II CP47 reaction center protein (508 aa).

A run of 6 helical transmembrane segments spans residues 21–36, 101–115, 140–156, 203–218, 237–252, and 457–472; these read SVHI…WAGS, IVFS…IWHW, GIHL…FGAF, IAAG…FHLS, VLSS…AFVV, and SFAL…HGSR.

It belongs to the PsbB/PsbC family. PsbB subfamily. In terms of assembly, PSII is composed of 1 copy each of membrane proteins PsbA, PsbB, PsbC, PsbD, PsbE, PsbF, PsbH, PsbI, PsbJ, PsbK, PsbL, PsbM, PsbT, PsbX, PsbY, PsbZ, Psb30/Ycf12, at least 3 peripheral proteins of the oxygen-evolving complex and a large number of cofactors. It forms dimeric complexes. Requires Binds multiple chlorophylls. PSII binds additional chlorophylls, carotenoids and specific lipids. as cofactor.

The protein resides in the plastid. The protein localises to the chloroplast thylakoid membrane. In terms of biological role, one of the components of the core complex of photosystem II (PSII). It binds chlorophyll and helps catalyze the primary light-induced photochemical processes of PSII. PSII is a light-driven water:plastoquinone oxidoreductase, using light energy to abstract electrons from H(2)O, generating O(2) and a proton gradient subsequently used for ATP formation. The protein is Photosystem II CP47 reaction center protein of Fagopyrum esculentum subsp. ancestrale (Wild buckwheat).